A 462-amino-acid chain; its full sequence is 3-ketoacyl-CoA thiolase 2, peroxisomal (462 aa).

The N-terminal 34 residues, Met1–Cys34, are a transit peptide targeting the peroxisome. The active-site Acyl-thioester intermediate is Cys138. Residues Cys138 and Cys192 are joined by a disulfide bond. Active-site proton acceptor residues include His393 and Cys425.

Belongs to the thiolase-like superfamily. Thiolase family. In terms of assembly, forms homodimers. Accumulates in etiolated cotyledons and in seedlings, also present in roots, flowers and siliques (at protein level). High levels in wounded leaves.

It is found in the peroxisome. The protein resides in the glyoxysome. The catalysed reaction is an acyl-CoA + acetyl-CoA = a 3-oxoacyl-CoA + CoA. It participates in lipid metabolism; fatty acid metabolism. Its function is as follows. Involved in long chain fatty-acid beta-oxidation prior to gluconeogenesis during germination and subsequent seedling growth. Confers sensitivity to 2,4-dichlorophenoxybutiric acid (2,4-DB). Required for local and systemic induction of jasmonic acid (JA) biosynthesis after wounding. Seems to be involved in JA biosynthesis during senescence. May be involved in the positive regulation of abscisic acid-activated signaling pathway. The sequence is that of 3-ketoacyl-CoA thiolase 2, peroxisomal (PED1) from Arabidopsis thaliana (Mouse-ear cress).